A 576-amino-acid chain; its full sequence is Immunoglobulin mu heavy chain (576 aa).

Pyrrolidone carboxylic acid is present on Gln1. 5 consecutive Ig-like domains span residues 1–97 (QVTL…TYYC), 132–212 (PTLF…EHVC), 236–334 (PKVS…QNAS), 352–442 (PSFA…QTIS), and 452–553 (PDVY…RTVD). The interval 1 to 124 (QVTLTESGPA…VWGKGTTVTV (124 aa)) is variable (V) domain, involved in antigen recognition. Intrachain disulfides connect Cys22-Cys97, Cys153-Cys212, and Cys259-Cys320. N-linked (GlcNAc...) asparagine glycosylation is found at Asn74 and Asn170. The interval 125 to 576 (SSGSASAPTL…VMSDTAGTCY (452 aa)) is constant (C) domain. N-linked (GlcNAc...) asparagine glycans are attached at residues Asn332, Asn395, and Asn402. 2 disulfide bridges follow: Cys367/Cys426 and Cys474/Cys536. Asn563 is a glycosylation site (N-linked (GlcNAc...) asparagine).

As to quaternary structure, immunoglobulins are composed of two identical heavy chains and two identical light chains; disulfide-linked. It is found almost exclusively as a homopentamer in the serum. Membrane-bound IgM molecules are non-covalently associated with heterodimer of CD79A and CD79B.

It localises to the secreted. The protein localises to the cell membrane. Functionally, immunoglobulins, also known as antibodies, are membrane-bound or secreted glycoproteins produced by B lymphocytes. In the recognition phase of humoral immunity, the membrane-bound immunoglobulins serve as receptors which, upon binding of a specific antigen, trigger the clonal expansion and differentiation of B lymphocytes into immunoglobulins-secreting plasma cells. Secreted immunoglobulins mediate the effector phase of humoral immunity, which results in the elimination of bound antigens. The antigen binding site is formed by the variable domain of one heavy chain, together with that of its associated light chain. Thus, each immunoglobulin has two antigen binding sites with remarkable affinity for a particular antigen. The variable domains are assembled by a process called V-(D)-J rearrangement and can then be subjected to somatic hypermutations which, after exposure to antigen and selection, allow affinity maturation for a particular antigen. IgM antibodies play an important role in primary defense mechanisms. They have been shown to be involved in early recognition of external invaders like bacteria and viruses, cellular waste and modified self, as well as in recognition and elimination of precancerous and cancerous lesions. The membrane-bound form is found in the majority of normal B cells alongside with IgD. Membrane-bound IgM induces the phosphorylation of CD79A and CD79B by the Src family of protein tyrosine kinases. It may cause death of cells by apoptosis. It is also found in soluble form, which represents about 30% of the total serum immunoglobulins where it is found almost exclusively as a homopentamer. After the antigen binds to the B cell receptor, the secreted form is secreted in large amounts (, PubMed:16895553). This Homo sapiens (Human) protein is Immunoglobulin mu heavy chain.